The chain runs to 352 residues: Holliday junction branch migration complex subunit RuvB (352 aa).

The segment at 1–26 (MIETDKLRAAAPERLISPQPADRQED) is disordered. The tract at residues 4-193 (TDKLRAAAPE…FGIVSRLEFY (190 aa)) is large ATPase domain (RuvB-L). ATP contacts are provided by residues Leu-32, Arg-33, Gly-74, Lys-77, Thr-78, Thr-79, 140 to 142 (EDF), Arg-183, Tyr-193, and Arg-230. Thr-78 serves as a coordination point for Mg(2+). The interval 194 to 264 (TPDELGFIVS…VADAALRMLD (71 aa)) is small ATPAse domain (RuvB-S). The segment at 267 to 352 (SLGLDLMDRK…RPGGTDLFGG (86 aa)) is head domain (RuvB-H). DNA contacts are provided by Arg-322 and Arg-327.

Belongs to the RuvB family. As to quaternary structure, homohexamer. Forms an RuvA(8)-RuvB(12)-Holliday junction (HJ) complex. HJ DNA is sandwiched between 2 RuvA tetramers; dsDNA enters through RuvA and exits via RuvB. An RuvB hexamer assembles on each DNA strand where it exits the tetramer. Each RuvB hexamer is contacted by two RuvA subunits (via domain III) on 2 adjacent RuvB subunits; this complex drives branch migration. In the full resolvosome a probable DNA-RuvA(4)-RuvB(12)-RuvC(2) complex forms which resolves the HJ.

The protein localises to the cytoplasm. It carries out the reaction ATP + H2O = ADP + phosphate + H(+). The RuvA-RuvB-RuvC complex processes Holliday junction (HJ) DNA during genetic recombination and DNA repair, while the RuvA-RuvB complex plays an important role in the rescue of blocked DNA replication forks via replication fork reversal (RFR). RuvA specifically binds to HJ cruciform DNA, conferring on it an open structure. The RuvB hexamer acts as an ATP-dependent pump, pulling dsDNA into and through the RuvAB complex. RuvB forms 2 homohexamers on either side of HJ DNA bound by 1 or 2 RuvA tetramers; 4 subunits per hexamer contact DNA at a time. Coordinated motions by a converter formed by DNA-disengaged RuvB subunits stimulates ATP hydrolysis and nucleotide exchange. Immobilization of the converter enables RuvB to convert the ATP-contained energy into a lever motion, pulling 2 nucleotides of DNA out of the RuvA tetramer per ATP hydrolyzed, thus driving DNA branch migration. The RuvB motors rotate together with the DNA substrate, which together with the progressing nucleotide cycle form the mechanistic basis for DNA recombination by continuous HJ branch migration. Branch migration allows RuvC to scan DNA until it finds its consensus sequence, where it cleaves and resolves cruciform DNA. In Azoarcus sp. (strain BH72), this protein is Holliday junction branch migration complex subunit RuvB.